Reading from the N-terminus, the 298-residue chain is Aspartate carbamoyltransferase catalytic subunit (298 aa).

Carbamoyl phosphate-binding residues include Arg50 and Thr51. Lys79 is an L-aspartate binding site. Arg100, His128, and Gln131 together coordinate carbamoyl phosphate. L-aspartate is bound by residues Arg160 and Arg221. Residues Leu260 and Pro261 each coordinate carbamoyl phosphate.

This sequence belongs to the aspartate/ornithine carbamoyltransferase superfamily. ATCase family. Heterooligomer of catalytic and regulatory chains.

It catalyses the reaction carbamoyl phosphate + L-aspartate = N-carbamoyl-L-aspartate + phosphate + H(+). The protein operates within pyrimidine metabolism; UMP biosynthesis via de novo pathway; (S)-dihydroorotate from bicarbonate: step 2/3. In terms of biological role, catalyzes the condensation of carbamoyl phosphate and aspartate to form carbamoyl aspartate and inorganic phosphate, the committed step in the de novo pyrimidine nucleotide biosynthesis pathway. The chain is Aspartate carbamoyltransferase catalytic subunit from Methanospirillum hungatei JF-1 (strain ATCC 27890 / DSM 864 / NBRC 100397 / JF-1).